The sequence spans 221 residues: 2-amino-5-formylamino-6-ribosylaminopyrimidin-4(3H)-one 5'-monophosphate deformylase (221 aa).

Fe cation is bound by residues E29, H31, D40, and H108.

The protein belongs to the creatininase superfamily. FAPy deformylase family. Homodimer. Requires Fe(2+) as cofactor. Zn(2+) serves as cofactor.

It catalyses the reaction 2-amino-5-formylamino-6-(5-phospho-D-ribosylamino)pyrimidin-4(3H)-one + H2O = 2,5-diamino-6-(1-D-ribosylamino)pyrimidin-4(3H)-one 5'-phosphate + formate + H(+). It functions in the pathway cofactor biosynthesis; coenzyme F420 biosynthesis. Its pathway is cofactor biosynthesis; riboflavin biosynthesis. Its function is as follows. Catalyzes the hydrolysis of the formamide of 2-amino-5-formylamino-6-ribosylamino-4(3H)-pyrimidinone 5'-monophosphate (FAPy) to form 2,5-diamino-6-ribosylamino-4(3H)-pyrimidinone 5'-phosphate (APy). The polypeptide is 2-amino-5-formylamino-6-ribosylaminopyrimidin-4(3H)-one 5'-monophosphate deformylase (Methanococcus maripaludis (strain C7 / ATCC BAA-1331)).